The chain runs to 211 residues: Endonuclease V (211 aa).

The Mg(2+) site is built by D31 and E95. Positions I182–N211 are disordered.

It belongs to the endonuclease V family. Requires Mg(2+) as cofactor.

The protein resides in the cytoplasm. It catalyses the reaction Endonucleolytic cleavage at apurinic or apyrimidinic sites to products with a 5'-phosphate.. Functionally, DNA repair enzyme involved in the repair of deaminated bases. Selectively cleaves double-stranded DNA at the second phosphodiester bond 3' to a deoxyinosine leaving behind the intact lesion on the nicked DNA. This chain is Endonuclease V, found in Pyrococcus horikoshii (strain ATCC 700860 / DSM 12428 / JCM 9974 / NBRC 100139 / OT-3).